The chain runs to 966 residues: Muscular LMNA-interacting protein (966 aa).

S129 is subject to Phosphoserine. Disordered stretches follow at residues 132 to 154 (EDEATCRQGEQGPPGATGNIATR), 182 to 207 (SHPEIPHGIAPQQKHGQLTSPTTSEQ), 303 to 337 (LAPEAQKKVSTSSALNPREDVRTSPSPASGASLRS), 354 to 388 (PSPKPLTSSSHGSLSTVCSQTSSSGNLSKSGLKSP), 434 to 562 (IKQT…TRPS), 597 to 684 (KRTC…TPSL), 785 to 837 (SMHS…SQLT), and 929 to 966 (SLRDEQEKSPTLLSQDTYNKPGHPMVTIPEHDTLDSKE). The interval 144–810 (PPGATGNIAT…GSETIKTPTT (667 aa)) is required for interaction with ISL1. Composition is skewed to polar residues over residues 195–207 (KHGQLTSPTTSEQ) and 325–337 (TSPSPASGASLRS). 3 stretches are compositionally biased toward low complexity: residues 354 to 387 (PSPKPLTSSSHGSLSTVCSQTSSSGNLSKSGLKS), 437 to 455 (TPSTPKKSLSSCSLTTGST), and 478 to 497 (PLSQAQPPSPPALASSSYAA). The residue at position 486 (S486) is a Phosphoserine. Residues 507-521 (TLRSSTTPPQSQTDL) show a composition bias toward polar residues. Basic and acidic residues-rich tracts occupy residues 542–555 (GRKDGDLRAPEKNR) and 597–607 (KRTCSQRHSDQ). Composition is skewed to polar residues over residues 639–649 (SSLTQALQRSP) and 657–684 (GSATCPSRTGMPDSTASNRSSRVSTPSL). Over residues 785-797 (SMHSSDSPSRPSQ) the composition is skewed to low complexity. Phosphoserine is present on S791. The span at 798–810 (TMLGSETIKTPTT) shows a compositional bias: polar residues. Residues 825 to 834 (SSSSSTTSES) show a composition bias toward low complexity. Residues 937 to 946 (SPTLLSQDTY) show a composition bias toward polar residues. The segment covering 957–966 (PEHDTLDSKE) has biased composition (basic and acidic residues).

Directly interacts with LMNA. Interacts with ISL1 (via N-terminal domain); the interaction represses ISL1 transactivator activity. Interactions of ISL1 with MLIP1 and GCN5/KAT2A may be mutually exclusive. As to expression, expressed in cardiomyoctes. Expression is highly reduced in hypertrophic cardiomyocytes.

It is found in the nucleus. The protein localises to the nucleus envelope. The protein resides in the PML body. Its subcellular location is the cytoplasm. It localises to the cytosol. It is found in the cell membrane. The protein localises to the sarcolemma. In terms of biological role, required for myoblast differentiation into myotubes, possibly acting as a transcriptional regulator of the myogenic program. Required for cardiac adaptation to stress through integrated regulation of the AKT/mTOR pathways and FOXO1. Regulates cardiac homeostasis and plays a role in the protection against cardiac hypertrophy. Binds chromatin. May act as a transcriptional cofactor for ISL1, repressing its transcriptional activity. May also repress MYOCD transcriptional activity. In Rattus norvegicus (Rat), this protein is Muscular LMNA-interacting protein.